The chain runs to 236 residues: 3-oxoacyl-[acyl-carrier-protein] reductase (236 aa).

M1 is subject to N-acetylmethionine. NADP(+) is bound by residues 11 to 14 and 34 to 35; these read SRGI and RN. Position 40 is an N6-acetyllysine (K40). NADP(+) is bound by residues D56 and 83-85; that span reads AAG. K96 is modified (N6-acetyllysine). Substrate is bound at residue S134. NADP(+) is bound by residues Y147, K151, and 180–182; that span reads IRT. Y147 (proton acceptor) is an active-site residue. Residue K194 is modified to N6-acetyllysine.

It belongs to the short-chain dehydrogenases/reductases (SDR) family. In terms of assembly, homotetramer (in vitro). Heterotetramer with HSD17B8; contains two molecules each of HSD17B8 and CBR4. Does not form homotetramers when HSD17B8 is coexpressed, only heterotetramers (in vitro).

The protein localises to the mitochondrion matrix. It catalyses the reaction a (3R)-hydroxyacyl-[ACP] + NADP(+) = a 3-oxoacyl-[ACP] + NADPH + H(+). The catalysed reaction is a quinone + NADPH + H(+) = a quinol + NADP(+). Its pathway is lipid metabolism; fatty acid biosynthesis. In terms of biological role, component of the heterotetramer complex KAR (3-ketoacyl-[acyl carrier protein] reductase or 3-ketoacyl-[ACP] reductase) that forms part of the mitochondrial fatty acid synthase (mtFAS). Beta-subunit of the KAR heterotetramer complex, responsible for the 3-ketoacyl-ACP reductase activity of the mtFAS, reduces 3-oxoacyl-[ACP] to (3R)-hydroxyacyl-[ACP] in a NADPH-dependent manner with no chain length preference, thereby participating in mitochondrial fatty acid biosynthesis. The homotetramer has NADPH-dependent quinone reductase activity (in vitro), hence could play a role in protection against cytotoxicity of exogenous quinones. As a heterotetramer, it can also reduce 9,10-phenanthrenequinone, 1,4-benzoquinone and various other o-quinones and p-quinones (in vitro). The protein is 3-oxoacyl-[acyl-carrier-protein] reductase (Cbr4) of Mus musculus (Mouse).